The sequence spans 210 residues: Kinetochore protein Spc25 (210 aa).

A coiled-coil region spans residues 42–106 (TMENIKRQQH…KKKQERDKLI (65 aa)).

Belongs to the SPC25 family. Component of the Ndc80 complex, which is composed of Ndc80, Nuf2 and Spc25.

The protein resides in the nucleus. Its subcellular location is the chromosome. It is found in the centromere. The protein localises to the kinetochore. In terms of biological role, acts as a component of the essential kinetochore-associated Ndc80 complex, which is required for chromosome segregation and spindle checkpoint activity during meiosis and mitosis. Required for kinetochore integrity and the organization of stable microtubule binding sites in the outer plate of the kinetochore. Participates in SAC signaling that responds specifically to disruptions in spindle microtubule dynamics. The NDC80 complex synergistically enhances the affinity of the SKA1 complex for microtubules and may allow the NDC80 complex to track depolymerizing microtubules. The polypeptide is Kinetochore protein Spc25 (Drosophila virilis (Fruit fly)).